Consider the following 436-residue polypeptide: 3-ketoacyl-CoA thiolase (436 aa).

Catalysis depends on cysteine 99, which acts as the Acyl-thioester intermediate. Catalysis depends on proton acceptor residues histidine 392 and cysteine 422.

This sequence belongs to the thiolase-like superfamily. Thiolase family. Heterotetramer of two alpha chains (FadJ) and two beta chains (FadI).

The protein resides in the cytoplasm. The catalysed reaction is an acyl-CoA + acetyl-CoA = a 3-oxoacyl-CoA + CoA. Its pathway is lipid metabolism; fatty acid beta-oxidation. In terms of biological role, catalyzes the final step of fatty acid oxidation in which acetyl-CoA is released and the CoA ester of a fatty acid two carbons shorter is formed. The chain is 3-ketoacyl-CoA thiolase from Salmonella heidelberg (strain SL476).